The sequence spans 317 residues: Retinol dehydrogenase 16 (317 aa).

An NAD(+)-binding site is contributed by 33 to 57 (FITGCDSGFGNLLARQLDRRGMRVL). Ser164 contacts substrate. Tyr176 serves as the catalytic Proton acceptor. Residues 289 to 308 (FFYLPMSYLPTFLVDALFYW) form a helical membrane-spanning segment.

The protein belongs to the short-chain dehydrogenases/reductases (SDR) family. Homodimer. Post-translationally, not N-glycosylated. In terms of tissue distribution, liver &gt; kidney &gt; brain &gt; lung &gt; testis.

It is found in the microsome membrane. The protein localises to the endoplasmic reticulum membrane. The catalysed reaction is all-trans-retinol--[retinol-binding protein] + NAD(+) = all-trans-retinal--[retinol-binding protein] + NADH + H(+). The enzyme catalyses all-trans-retinol + NAD(+) = all-trans-retinal + NADH + H(+). It carries out the reaction 13-cis-retinol + NAD(+) = 13-cis-retinal + NADH + H(+). It catalyses the reaction 11-cis-retinol + NAD(+) = 11-cis-retinal + NADH + H(+). The catalysed reaction is 9-cis-retinol + NAD(+) = 9-cis-retinal + NADH + H(+). The enzyme catalyses 5alpha-androstane-3alpha,17beta-diol + NAD(+) = 17beta-hydroxy-5alpha-androstan-3-one + NADH + H(+). It carries out the reaction androsterone + NAD(+) = 5alpha-androstan-3,17-dione + NADH + H(+). The protein operates within cofactor metabolism; retinol metabolism. In terms of biological role, oxidoreductase with a preference for NAD. Oxidizes all-trans-retinol, 9-cis-retinol, 11-cis-retinol and 13-cis-retinol to the corresponding aldehydes. Has higher activity towards CRBP-bound retinol than with free retinol. Oxidizes 3-alpha-hydroxysteroids. Oxidizes androstanediol and androsterone to dihydrotestosterone and androstanedione. Can also catalyze the reverse reaction. This is Retinol dehydrogenase 16 from Rattus norvegicus (Rat).